A 336-amino-acid polypeptide reads, in one-letter code: uncharacterized protein (336 aa).

A signal peptide spans 1–33; that stretch reads MGSAWPAEIRKIAKISKRLLGATVILGFGVAEA.

This is an uncharacterized protein from Sinorhizobium fredii (strain NBRC 101917 / NGR234).